Consider the following 137-residue polypeptide: ATP synthase epsilon chain (137 aa).

It belongs to the ATPase epsilon chain family. In terms of assembly, F-type ATPases have 2 components, CF(1) - the catalytic core - and CF(0) - the membrane proton channel. CF(1) has five subunits: alpha(3), beta(3), gamma(1), delta(1), epsilon(1). CF(0) has three main subunits: a, b and c.

The protein resides in the cell membrane. Its function is as follows. Produces ATP from ADP in the presence of a proton gradient across the membrane. This Thermobifida fusca (strain YX) protein is ATP synthase epsilon chain.